We begin with the raw amino-acid sequence, 105 residues long: UPF0145 protein LPC_0273 (105 aa).

This sequence belongs to the UPF0145 family.

In Legionella pneumophila (strain Corby), this protein is UPF0145 protein LPC_0273.